A 389-amino-acid chain; its full sequence is Alkanesulfonate monooxygenase (389 aa).

Belongs to the SsuD family.

The enzyme catalyses an alkanesulfonate + FMNH2 + O2 = an aldehyde + FMN + sulfite + H2O + 2 H(+). Catalyzes the desulfonation of aliphatic sulfonates. This chain is Alkanesulfonate monooxygenase, found in Rhizobium etli (strain CIAT 652).